The chain runs to 573 residues: Proline--tRNA ligase (573 aa).

It belongs to the class-II aminoacyl-tRNA synthetase family. ProS type 1 subfamily. As to quaternary structure, homodimer.

It is found in the cytoplasm. The enzyme catalyses tRNA(Pro) + L-proline + ATP = L-prolyl-tRNA(Pro) + AMP + diphosphate. Functionally, catalyzes the attachment of proline to tRNA(Pro) in a two-step reaction: proline is first activated by ATP to form Pro-AMP and then transferred to the acceptor end of tRNA(Pro). As ProRS can inadvertently accommodate and process non-cognate amino acids such as alanine and cysteine, to avoid such errors it has two additional distinct editing activities against alanine. One activity is designated as 'pretransfer' editing and involves the tRNA(Pro)-independent hydrolysis of activated Ala-AMP. The other activity is designated 'posttransfer' editing and involves deacylation of mischarged Ala-tRNA(Pro). The misacylated Cys-tRNA(Pro) is not edited by ProRS. The chain is Proline--tRNA ligase from Geobacter sp. (strain M21).